The primary structure comprises 131 residues: Large ribosomal subunit protein bL19 (131 aa).

It belongs to the bacterial ribosomal protein bL19 family.

Its function is as follows. This protein is located at the 30S-50S ribosomal subunit interface and may play a role in the structure and function of the aminoacyl-tRNA binding site. The polypeptide is Large ribosomal subunit protein bL19 (Anaeromyxobacter dehalogenans (strain 2CP-C)).